We begin with the raw amino-acid sequence, 590 residues long: Putative laccase-19 (590 aa).

The N-terminal stretch at 1 to 28 (MEKLSMVTSLLCAITVAVLAVAVVSGEA) is a signal peptide. 2 consecutive Plastocyanin-like domains span residues 36–152 (VVHE…PRDG) and 161–315 (KDVP…YAGA). N-linked (GlcNAc...) asparagine glycans are attached at residues Asn41 and Asn47. Residues His86 and His88 each contribute to the Cu cation site. The N-linked (GlcNAc...) asparagine glycan is linked to Asn120. 2 residues coordinate Cu cation: His131 and His133. N-linked (GlcNAc...) asparagine glycosylation is found at Asn205, Asn344, Asn378, Asn397, Asn434, and Asn465. Residues 424–566 (DFPIRPPRPF…ATAFIVEDGP (143 aa)) enclose the Plastocyanin-like 3 domain. Residues Asn483, His486, His488, His545, Cys546, His547, His551, and Met556 each coordinate Cu cation. The disordered stretch occupies residues 565-590 (GPTPETSLPPPPPEFKRCGNNGLSQP).

The protein belongs to the multicopper oxidase family. It depends on Cu cation as a cofactor.

Its subcellular location is the secreted. The protein resides in the extracellular space. The protein localises to the apoplast. It carries out the reaction 4 hydroquinone + O2 = 4 benzosemiquinone + 2 H2O. In terms of biological role, lignin degradation and detoxification of lignin-derived products. This Oryza sativa subsp. indica (Rice) protein is Putative laccase-19 (LAC19).